Consider the following 102-residue polypeptide: Small ribosomal subunit protein uS10 (102 aa).

Belongs to the universal ribosomal protein uS10 family. Part of the 30S ribosomal subunit.

Involved in the binding of tRNA to the ribosomes. This is Small ribosomal subunit protein uS10 from Bacillus cereus (strain ATCC 10987 / NRS 248).